The chain runs to 318 residues: Lipoyl synthase (318 aa).

[4Fe-4S] cluster-binding residues include Cys64, Cys69, Cys75, Cys90, Cys94, Cys97, and Ser304. Positions 76–293 (FSGGTATFMI…AEEGYKMGFK (218 aa)) constitute a Radical SAM core domain.

This sequence belongs to the radical SAM superfamily. Lipoyl synthase family. Requires [4Fe-4S] cluster as cofactor.

The protein localises to the cytoplasm. It carries out the reaction [[Fe-S] cluster scaffold protein carrying a second [4Fe-4S](2+) cluster] + N(6)-octanoyl-L-lysyl-[protein] + 2 oxidized [2Fe-2S]-[ferredoxin] + 2 S-adenosyl-L-methionine + 4 H(+) = [[Fe-S] cluster scaffold protein] + N(6)-[(R)-dihydrolipoyl]-L-lysyl-[protein] + 4 Fe(3+) + 2 hydrogen sulfide + 2 5'-deoxyadenosine + 2 L-methionine + 2 reduced [2Fe-2S]-[ferredoxin]. The protein operates within protein modification; protein lipoylation via endogenous pathway; protein N(6)-(lipoyl)lysine from octanoyl-[acyl-carrier-protein]: step 2/2. Functionally, catalyzes the radical-mediated insertion of two sulfur atoms into the C-6 and C-8 positions of the octanoyl moiety bound to the lipoyl domains of lipoate-dependent enzymes, thereby converting the octanoylated domains into lipoylated derivatives. The polypeptide is Lipoyl synthase (Pseudomonas syringae pv. tomato (strain ATCC BAA-871 / DC3000)).